The following is a 253-amino-acid chain: uncharacterized protein (253 aa).

Positions 17, 36, 62, 89, 123, 158, 162, 191, and 193 each coordinate NADP(+). The active-site Proton acceptor is Y158. K162 (lowers pKa of active site Tyr) is an active-site residue.

Belongs to the short-chain dehydrogenases/reductases (SDR) family.

The protein resides in the cytoplasm. It is found in the nucleus. This is an uncharacterized protein from Schizosaccharomyces pombe (strain 972 / ATCC 24843) (Fission yeast).